We begin with the raw amino-acid sequence, 421 residues long: Lipid II:glycine glycyltransferase (421 aa).

This sequence belongs to the FemABX family. Monomer.

Its subcellular location is the cytoplasm. The enzyme catalyses beta-D-GlcNAc-(1-&gt;4)-Mur2Ac(oyl-L-Ala-D-isoglutaminyl-L-Lys-D-Ala-D-Ala)-di-trans,octa-cis-undecaprenyl diphosphate + glycyl-tRNA(Gly) = beta-D-GlcNAc-(1-&gt;4)-Mur2Ac(oyl-L-Ala-D-isoglutaminyl-L-Lys-(N(6)-Gly)-D-Ala-D-Ala)-di-trans,octa-cis-undecaprenyl diphosphate + tRNA(Gly) + H(+). Its function is as follows. Catalyzes the incorporation of the first glycine of the pentaglycine interpeptide bridge, which is characteristic of the S.aureus peptidoglycan. This glycine is added to the epsilon-amino group of the L-lysine of the membrane-bound lipid II intermediate (GlcNAc-(beta-1,4)-N-acetylmuramic acid(-L-Ala-D-iGln-L-Lys-D-Ala-D-Ala)-pyrophosphoryl-undecaprenol), using glycyl-tRNA(Gly) as donor, in a ribosome-independent mechanism. Involved in methicillin resistance. This is Lipid II:glycine glycyltransferase (femX) from Staphylococcus aureus (strain COL).